Reading from the N-terminus, the 505-residue chain is Ribosomal RNA small subunit methyltransferase F (505 aa).

S-adenosyl-L-methionine contacts are provided by residues 123 to 129 (ASAPGSK), Glu147, Asp174, and Asp192. Cys245 (nucleophile) is an active-site residue. The disordered stretch occupies residues 409–437 (GTNANNNSNTNPNNNANTNPNNNSNTNPR). Residues 410–435 (TNANNNSNTNPNNNANTNPNNNSNTN) are compositionally biased toward low complexity.

The protein belongs to the class I-like SAM-binding methyltransferase superfamily. RsmB/NOP family.

It localises to the cytoplasm. The enzyme catalyses cytidine(1407) in 16S rRNA + S-adenosyl-L-methionine = 5-methylcytidine(1407) in 16S rRNA + S-adenosyl-L-homocysteine + H(+). Its function is as follows. Specifically methylates the cytosine at position 1407 (m5C1407) of 16S rRNA. This chain is Ribosomal RNA small subunit methyltransferase F, found in Shewanella denitrificans (strain OS217 / ATCC BAA-1090 / DSM 15013).